We begin with the raw amino-acid sequence, 1512 residues long: Mitogen-activated protein kinase kinase kinase 1 (1512 aa).

The segment covering 1-13 has biased composition (low complexity); it reads MAAAAGNRASSSG. 3 disordered regions span residues 1-37, 67-181, and 213-304; these read MAAA…SSAP, SVEL…DRPE, and VKPI…PEET. Ala-2 carries the post-translational modification N-acetylalanine. Ser-21 and Ser-35 each carry phosphoserine. Low complexity-rich tracts occupy residues 81–99, 129–142, and 150–160; these read AASP…ADAA, AAPD…AAAE, and AAEPSPAAAPA. Ser-137 and Ser-154 each carry phosphoserine. Residues 162–181 are compositionally biased toward basic and acidic residues; that stretch reads REMENKETLKGLHKMDDRPE. A compositionally biased stretch (low complexity) spans 250 to 260; that stretch reads SPSPGNSPSGR. Position 275 is a phosphoserine (Ser-275). Thr-285 is subject to Phosphothreonine. Residues Ser-292, Ser-297, and Ser-300 each carry the phosphoserine modification. The segment at 338–366 adopts an SWIM-type zinc-finger fold; that stretch reads YRVFIGPQNCSCARGTFCIHLLFVMLRVF. Over residues 416-433 the composition is skewed to low complexity; it reads SNSHTLSSSSTSTSSSEN. The disordered stretch occupies residues 416–436; it reads SNSHTLSSSSTSTSSSENSIK. The segment at 443–492 adopts an RING-type zinc-finger fold; sequence CPICLLGMLDEESLTVCEDGCRNKLHHHCMSIWAEECRRNREPLICPLCR. 2 positions are modified to phosphoserine: Ser-507 and Ser-531. Disordered stretches follow at residues 511–532 and 602–624; these read SPSS…AGSR and STGN…GSSQ. Positions 611 to 624 are enriched in low complexity; it reads GSSPSGGATSGSSQ. Ser-923 is subject to Phosphoserine. The tract at residues 933–972 is disordered; sequence SISVGPSSSTTTTTTTTEQPKPMVQTKGRPHSQCLNSSPL. The segment covering 939-949 has biased composition (low complexity); the sequence is SSSTTTTTTTT. Ser-1018 carries the post-translational modification Phosphoserine. The span at 1032 to 1041 shows a compositional bias: basic and acidic residues; sequence NCPENKDSDK. Residues 1032–1087 are disordered; the sequence is NCPENKDSDKLSPVFTQSRPLPSSNIHRPKPSRPTPGNTSKQGDPSKNSMTLDLNS. Ser-1043 is subject to Phosphoserine. Polar residues-rich tracts occupy residues 1045–1057 and 1066–1087; these read VFTQ…SSNI and TPGN…DLNS. The 266-residue stretch at 1243-1508 folds into the Protein kinase domain; the sequence is WLKGQQIGLG…SRELLKHPVF (266 aa). ATP-binding positions include 1249–1257 and Lys-1272; that span reads IGLGAFSSC. Asp-1369 serves as the catalytic Proton acceptor. A phosphothreonine; by autocatalysis mark is found at Thr-1400 and Thr-1412.

It belongs to the protein kinase superfamily. STE Ser/Thr protein kinase family. MAP kinase kinase kinase subfamily. Binds both upstream activators and downstream substrates in multimolecular complexes through its N-terminus. Oligomerizes after binding MAP2K4 or TRAF2. Interacts with AXIN1. Interacts (via the kinase catalytic domain) with STK38. Interacts with GRIPAP1. The cofactor is Mg(2+). In terms of processing, autophosphorylated.

It catalyses the reaction L-seryl-[protein] + ATP = O-phospho-L-seryl-[protein] + ADP + H(+). The catalysed reaction is L-threonyl-[protein] + ATP = O-phospho-L-threonyl-[protein] + ADP + H(+). It carries out the reaction S-ubiquitinyl-[E2 ubiquitin-conjugating enzyme]-L-cysteine + [acceptor protein]-L-lysine = [E2 ubiquitin-conjugating enzyme]-L-cysteine + N(6)-ubiquitinyl-[acceptor protein]-L-lysine.. Its activity is regulated as follows. Activated by autophosphorylation on Thr-1400 and Thr-1412 following oligomerization. Functionally, component of a protein kinase signal transduction cascade. Activates the ERK and JNK kinase pathways by phosphorylation of MAP2K1 and MAP2K4. May phosphorylate the MAPK8/JNK1 kinase. Activates CHUK and IKBKB, the central protein kinases of the NF-kappa-B pathway. This is Mitogen-activated protein kinase kinase kinase 1 (MAP3K1) from Homo sapiens (Human).